Reading from the N-terminus, the 148-residue chain is Lysozyme C (148 aa).

Residues 1–18 form the signal peptide; sequence MKAVIILGLVLLSVTVQG. In terms of domain architecture, C-type lysozyme spans 19-148; the sequence is KIFERCELAR…VSQYVQGCGV (130 aa). 4 disulfides stabilise this stretch: C24–C146, C48–C134, C83–C99, and C95–C113. Residues E53 and D71 contribute to the active site.

The protein belongs to the glycosyl hydrolase 22 family. As to quaternary structure, monomer.

Its subcellular location is the secreted. The catalysed reaction is Hydrolysis of (1-&gt;4)-beta-linkages between N-acetylmuramic acid and N-acetyl-D-glucosamine residues in a peptidoglycan and between N-acetyl-D-glucosamine residues in chitodextrins.. Its function is as follows. Lysozymes have primarily a bacteriolytic function; those in tissues and body fluids are associated with the monocyte-macrophage system and enhance the activity of immunoagents. This chain is Lysozyme C (LYZ), found in Papio anubis (Olive baboon).